The primary structure comprises 421 residues: Cyclin-A2 (421 aa).

Methionine 1 is subject to N-acetylmethionine. Residues 1-60 (MPGSSRQSGREAGSALLSLQQEDQENVNPEKAAPDQRARAALKTGNARGNAPQQRLKARR) are disordered. Residue serine 5 is modified to Phosphoserine.

This sequence belongs to the cyclin family. Cyclin AB subfamily. In terms of assembly, interacts with the CDK1 and CDK2 protein kinases to form serine/threonine kinase holoenzyme complexes. Interacts with CDK1 (hyperphosphorylated form in G1 and underphosphorylated forms in S and G2). Interacts with CDK2; the interaction increases from G1 to G2. Interacts (associated with CDK2 but not with CDK1) with SCAPER; regulates the activity of CCNA2/CDK2 by transiently maintaining CCNA2 in the cytoplasm. Forms a ternary complex with CDK2 and CDKN1B; CDKN1B inhibits the kinase activity of CDK2 through conformational rearrangements. Interacts with INCA1. In terms of processing, polyubiquitinated via 'Lys-11'-linked ubiquitin by the anaphase-promoting complex (APC/C), leading to its degradation by the proteasome. Deubiquitinated and stabilized by USP37 enables entry into S phase. Ubiquitinated during the G1 phase by the SCF(FBXO31) complex, leading to its proteasomal degradation.

The protein resides in the nucleus. It localises to the cytoplasm. Cyclin which controls both the G1/S and the G2/M transition phases of the cell cycle. Functions through the formation of specific serine/threonine kinase holoenzyme complexes with the cyclin-dependent protein kinases CDK1 and CDK2. The cyclin subunit confers the substrate specificity of these complexes and differentially interacts with and activates CDK1 and CDK2 throughout the cell cycle. The chain is Cyclin-A2 from Mesocricetus auratus (Golden hamster).